Here is a 262-residue protein sequence, read N- to C-terminus: uncharacterized protein (262 aa).

This is an uncharacterized protein from Acanthamoeba polyphaga mimivirus (APMV).